Consider the following 159-residue polypeptide: Transmembrane protein 42 (159 aa).

The next 4 helical transmembrane spans lie at 37-57 (FWGVFNCLCAGSFGALAAASA), 59-79 (LAFGSEVSMGLCVLGIIVMAS), 100-120 (IASVTVTFSNILSSAFLGYVL), and 124-144 (CQEVLWWGGVFLILCGLTLIH).

The protein resides in the membrane. The polypeptide is Transmembrane protein 42 (TMEM42) (Pongo abelii (Sumatran orangutan)).